Here is a 121-residue protein sequence, read N- to C-terminus: Small ribosomal subunit protein bS6 (121 aa).

Residues 99–121 (PLPAPRVAPGTEAPAEPEAAAPA) form a disordered region. A compositionally biased stretch (low complexity) spans 110–121 (EAPAEPEAAAPA).

The protein belongs to the bacterial ribosomal protein bS6 family.

Its function is as follows. Binds together with bS18 to 16S ribosomal RNA. This chain is Small ribosomal subunit protein bS6, found in Synechococcus sp. (strain CC9311).